The following is a 452-amino-acid chain: Phosphoglucosamine mutase (452 aa).

The active-site Phosphoserine intermediate is the serine 108. Mg(2+)-binding residues include serine 108, aspartate 247, aspartate 249, and aspartate 251. Residue serine 108 is modified to Phosphoserine.

It belongs to the phosphohexose mutase family. It depends on Mg(2+) as a cofactor. Activated by phosphorylation.

It catalyses the reaction alpha-D-glucosamine 1-phosphate = D-glucosamine 6-phosphate. Its function is as follows. Catalyzes the conversion of glucosamine-6-phosphate to glucosamine-1-phosphate. The chain is Phosphoglucosamine mutase from Burkholderia thailandensis (strain ATCC 700388 / DSM 13276 / CCUG 48851 / CIP 106301 / E264).